Consider the following 367-residue polypeptide: 2-aminoethylphosphonate--pyruvate transaminase (367 aa).

At K194 the chain carries N6-(pyridoxal phosphate)lysine.

This sequence belongs to the class-V pyridoxal-phosphate-dependent aminotransferase family. PhnW subfamily. As to quaternary structure, homodimer. The cofactor is pyridoxal 5'-phosphate.

The catalysed reaction is (2-aminoethyl)phosphonate + pyruvate = phosphonoacetaldehyde + L-alanine. In terms of biological role, involved in phosphonate degradation. The protein is 2-aminoethylphosphonate--pyruvate transaminase of Salmonella choleraesuis (strain SC-B67).